We begin with the raw amino-acid sequence, 305 residues long: Peroxisome assembly protein 26 (305 aa).

The disordered stretch occupies residues 1–20 (MKSDSSTSAAPLRGLGGPLR). Residues 1-246 (MKSDSSTSAA…RQLWDSAVSH (246 aa)) lie on the Cytoplasmic side of the membrane. A helical; Signal-anchor for type II membrane protein membrane pass occupies residues 247–267 (FFSLPFKKSLLAALILCLLVV). Residues 268 to 305 (RFDPASPSSLHFLYKLAQLFRWIRKAAFSRLYQLRIRD) lie on the Peroxisomal matrix side of the membrane.

Belongs to the peroxin-26 family. As to quaternary structure, interacts (via its cytoplasmic domain) with PEX6; interaction is direct and is ATP-dependent. Interacts with PEX1; interaction is indirect and is mediated via interaction with PEX6. Widely expressed. Highly expressed in kidney, liver, brain and skeletal muscles. Expressed at intermediate level in pancreas, placenta and heart. Weakly expressed in lung.

It is found in the peroxisome membrane. In terms of biological role, peroxisomal docking factor that anchors PEX1 and PEX6 to peroxisome membranes. PEX26 is therefore required for the formation of the PEX1-PEX6 AAA ATPase complex, a complex that mediates the extraction of the PEX5 receptor from peroxisomal membrane. This chain is Peroxisome assembly protein 26, found in Homo sapiens (Human).